A 433-amino-acid polypeptide reads, in one-letter code: KH domain-containing, RNA-binding, signal transduction-associated protein 1 (433 aa).

The interval 1 to 79 (MQRRDDSSAR…PLLPGGAVKM (79 aa)) is disordered. The span at 41–76 (GAQHPQPLLTGGAAAGSSGAQGPAAANPAPLLPGGA) shows a compositional bias: low complexity. Residues 82-243 (ENKYLPELMA…VKKFLVPDMM (162 aa)) form an involved in homodimerization region. In terms of domain architecture, KH spans 171–197 (QEETGAKISVLGKGSMRDKAKEEELRK). Disordered regions lie at residues 259–305 (GVPE…ALVR), 317–351 (AAVA…PPPP), and 403–433 (QDDW…YGRY). Positions 277-300 (APPPPPPVPRGRGVGPPPPPPPPR) are enriched in pro residues. The segment covering 329-342 (VRGAPAPRARAAGI) has biased composition (low complexity). The segment covering 424–433 (AYREHPYGRY) has biased composition (basic and acidic residues).

The protein belongs to the KHDRBS family. Self-associates to form homooligomers when bound to RNA, oligomerization appears to be limited when binding to proteins. Tyrosine phosphorylated by several non-receptor tyrosine kinases including LCK, FYN and JAK3. In terms of processing, acetylated. Positively correlates with ability to bind RNA. Post-translationally, methylated by HRMT1L2. Required for nuclear localization.

The protein resides in the nucleus. The protein localises to the cytoplasm. It localises to the membrane. In terms of biological role, recruited and tyrosine phosphorylated by several receptor systems, for example the T-cell, leptin and insulin receptors. Once phosphorylated, functions as an adapter protein in signal transduction cascades by binding to SH2 and SH3 domain-containing proteins. Role in G2-M progression in the cell cycle. Represses CBP-dependent transcriptional activation apparently by competing with other nuclear factors for binding to CBP. Also acts as a putative regulator of mRNA stability and/or translation rates and mediates mRNA nuclear export. Plays a role in the regulation of alternative splicing and influences mRNA splice site selection and exon inclusion. The chain is KH domain-containing, RNA-binding, signal transduction-associated protein 1 from Gallus gallus (Chicken).